The following is a 428-amino-acid chain: 3-phosphoshikimate 1-carboxyvinyltransferase (428 aa).

3-phosphoshikimate-binding residues include lysine 21, serine 22, and arginine 26. Lysine 21 contacts phosphoenolpyruvate. Residues glycine 91 and arginine 119 each coordinate phosphoenolpyruvate. Residues serine 164, glutamine 166, aspartate 311, and lysine 338 each contribute to the 3-phosphoshikimate site. Glutamine 166 provides a ligand contact to phosphoenolpyruvate. Catalysis depends on aspartate 311, which acts as the Proton acceptor. The phosphoenolpyruvate site is built by arginine 342 and arginine 383.

It belongs to the EPSP synthase family. Monomer.

The protein localises to the cytoplasm. The catalysed reaction is 3-phosphoshikimate + phosphoenolpyruvate = 5-O-(1-carboxyvinyl)-3-phosphoshikimate + phosphate. It participates in metabolic intermediate biosynthesis; chorismate biosynthesis; chorismate from D-erythrose 4-phosphate and phosphoenolpyruvate: step 6/7. Its function is as follows. Catalyzes the transfer of the enolpyruvyl moiety of phosphoenolpyruvate (PEP) to the 5-hydroxyl of shikimate-3-phosphate (S3P) to produce enolpyruvyl shikimate-3-phosphate and inorganic phosphate. The polypeptide is 3-phosphoshikimate 1-carboxyvinyltransferase (Campylobacter concisus (strain 13826)).